The following is a 70-amino-acid chain: Large ribosomal subunit protein bL31 (70 aa).

Zn(2+) is bound by residues cysteine 16, cysteine 18, cysteine 37, and cysteine 40.

It belongs to the bacterial ribosomal protein bL31 family. Type A subfamily. As to quaternary structure, part of the 50S ribosomal subunit. The cofactor is Zn(2+).

Binds the 23S rRNA. The protein is Large ribosomal subunit protein bL31 of Desulfovibrio desulfuricans (strain ATCC 27774 / DSM 6949 / MB).